A 667-amino-acid chain; its full sequence is Mannosyl-oligosaccharide alpha-1,2-mannosidase IA (667 aa).

The Cytoplasmic portion of the chain corresponds to 1 to 18 (MYRISPIGRKSNFHSREK). Residues 19–39 (CLIGLVLVTLCFLCFGGIFLL) traverse the membrane as a helical; Signal-anchor for type II membrane protein segment. The Lumenal portion of the chain corresponds to 40 to 667 (PDNFGSDRVL…PVTLPVSNAS (628 aa)). A disordered region spans residues 154 to 192 (GDNAASQASSHPQSSAQQHNQQQPQLPLGGGGNDQAPDT). Positions 156-178 (NAASQASSHPQSSAQQHNQQQPQ) are enriched in low complexity. An N-linked (GlcNAc...) asparagine glycan is attached at Asn-278. Cys-483 and Cys-515 are oxidised to a cystine. The Proton donor role is filled by Glu-529. Thr-640 is a binding site for Ca(2+).

The protein belongs to the glycosyl hydrolase 47 family. The cofactor is Ca(2+). Requires Mg(2+) as cofactor. Complex spatial distribution during embryogenesis, including expression in lobula plate giant neurons. Also expressed in adult wing and eyes.

The protein localises to the golgi apparatus membrane. The catalysed reaction is N(4)-(alpha-D-Man-(1-&gt;2)-alpha-D-Man-(1-&gt;2)-alpha-D-Man-(1-&gt;3)-[alpha-D-Man-(1-&gt;2)-alpha-D-Man-(1-&gt;3)-[alpha-D-Man-(1-&gt;2)-alpha-D-Man-(1-&gt;6)]-alpha-D-Man-(1-&gt;6)]-beta-D-Man-(1-&gt;4)-beta-D-GlcNAc-(1-&gt;4)-beta-D-GlcNAc)-L-asparaginyl-[protein] (N-glucan mannose isomer 9A1,2,3B1,2,3) + 4 H2O = N(4)-(alpha-D-Man-(1-&gt;3)-[alpha-D-Man-(1-&gt;3)-[alpha-D-Man-(1-&gt;6)]-alpha-D-Man-(1-&gt;6)]-beta-D-Man-(1-&gt;4)-beta-D-GlcNAc-(1-&gt;4)-beta-D-GlcNAc)-L-asparaginyl-[protein] (N-glucan mannose isomer 5A1,2) + 4 beta-D-mannose. It catalyses the reaction N(4)-(alpha-D-Man-(1-&gt;2)-alpha-D-Man-(1-&gt;2)-alpha-D-Man-(1-&gt;3)-[alpha-D-Man-(1-&gt;3)-[alpha-D-Man-(1-&gt;2)-alpha-D-Man-(1-&gt;6)]-alpha-D-Man-(1-&gt;6)]-beta-D-Man-(1-&gt;4)-beta-D-GlcNAc-(1-&gt;4)-beta-D-GlcNAc)-L-asparaginyl-[protein] (N-glucan mannose isomer 8A1,2,3B1,3) + 3 H2O = N(4)-(alpha-D-Man-(1-&gt;3)-[alpha-D-Man-(1-&gt;3)-[alpha-D-Man-(1-&gt;6)]-alpha-D-Man-(1-&gt;6)]-beta-D-Man-(1-&gt;4)-beta-D-GlcNAc-(1-&gt;4)-beta-D-GlcNAc)-L-asparaginyl-[protein] (N-glucan mannose isomer 5A1,2) + 3 beta-D-mannose. Its pathway is protein modification; protein glycosylation. In terms of biological role, involved in the maturation of Asn-linked oligosaccharides. Progressively trim alpha-1,2-linked mannose residues from Man(9)GlcNAc(2) to produce Man(5)GlcNAc(2). The protein is Mannosyl-oligosaccharide alpha-1,2-mannosidase IA of Drosophila melanogaster (Fruit fly).